The primary structure comprises 276 residues: Integrin-binding sialoprotein (276 aa).

Residues 1-16 (MRSALLLACLLATASA) form the signal peptide. The interval 54–251 (HRYKGSDSSE…EEPARGDSYR (198 aa)) is disordered. The span at 61-75 (SSEEEGDGSEEEEEG) shows a compositional bias: acidic residues. The segment covering 106 to 119 (QDCKGGQKGTRGDS) has biased composition (basic and acidic residues). Residues 116-118 (RGD) carry the Cell attachment site motif. A compositionally biased stretch (acidic residues) spans 120–144 (GDEDSDEEEEEEEEEEEEEEVEEQD). Polar residues predominate over residues 145-165 (VSVNGTSTNTTAETPHGNNTV). N-linked (GlcNAc...) asparagine glycosylation is found at Asn-148, Asn-153, and Asn-162. Over residues 167-188 (AEEEEDDDEEEEEEEEEEEEAE) the composition is skewed to acidic residues. Residues 189 to 200 (ATTAAATTAQDE) show a composition bias toward low complexity. Positions 228–230 (RGD) match the Cell attachment site motif. Positions 246–248 (RGD) match the Integrin-binding motif motif. Sulfotyrosine is present on residues Tyr-272 and Tyr-273.

Monomer. Interacts with integrins; the interaction promotes cell adhesion. Phosphorylated on serine and threonine residues.

It localises to the secreted. In terms of biological role, binds tightly to hydroxyapatite. Appears to form an integral part of the mineralized matrix. Probably important to cell-matrix interaction. Promotes adhesion and migration of various cells via the alpha-V/beta-3 integrin receptor (ITGAV:ITGB3). This chain is Integrin-binding sialoprotein (IBSP), found in Gallus gallus (Chicken).